The sequence spans 280 residues: Energy-coupling factor transporter ATP-binding protein EcfA1 (280 aa).

An ABC transporter domain is found at 6–244; that stretch reads IECKNVVYKY…VPLMKNIGLD (239 aa). Residue 43–50 participates in ATP binding; that stretch reads GHNGSGKS.

The protein belongs to the ABC transporter superfamily. Energy-coupling factor EcfA family. Forms a stable energy-coupling factor (ECF) transporter complex composed of 2 membrane-embedded substrate-binding proteins (S component), 2 ATP-binding proteins (A component) and 2 transmembrane proteins (T component).

It localises to the cell membrane. ATP-binding (A) component of a common energy-coupling factor (ECF) ABC-transporter complex. Unlike classic ABC transporters this ECF transporter provides the energy necessary to transport a number of different substrates. The protein is Energy-coupling factor transporter ATP-binding protein EcfA1 of Clostridium novyi (strain NT).